A 249-amino-acid chain; its full sequence is Zinc finger protein mnm-2 (249 aa).

The interval 20–65 is disordered; sequence PKEELETEEEDEEEDEEEELSSSEVTSENDMETESASSSASSVGQP. Residues 24-52 show a composition bias toward acidic residues; the sequence is LETEEEDEEEDEEEELSSSEVTSENDMET. C2H2-type zinc fingers lie at residues 168-190, 196-218, and 224-246; these read YRCDVCDKTFSRSNTLITHKRIH, FKCEHCGRAFRQPGNLTRHRLTH, and YVCGLCDKAFNRASNLHTHMRTH.

In larva and adult, expressed in the M3 pharyngeal motor neurons, extrapharyngeal neurons in the head, the PQR tail neurons, rectal cells, vulva cells, the spermetheca-uterine valve, body wall muscle cells and neurons of the ventral nerve cord. In the embryo, expressed in pharyngeal cells, extrapharyngeal head neurons and within the tail. Expressed in body wall muscle cells during late embryonic stages. Expressed in the mother cells of the M2 and M3 pharyngeal motor neurons precursor cells at the embryonic bean stage and subsequently in the M2 and M3 cells as they are born. Expression is sustained only in the two M3 cells up to at least the 5-day-old adult. In contrast, expression gradually declines in the M2 cells beginning from the time of their birth, and is completely undetectable by the time of hatching.

The protein localises to the nucleus. Required in the M3 pharyngeal motor neuron to guide the growth cone of the sister M2 motor neuron during axon development. This chain is Zinc finger protein mnm-2, found in Caenorhabditis elegans.